The following is a 264-amino-acid chain: Proteasome assembly chaperone 2 (264 aa).

Thr137 carries the post-translational modification Phosphothreonine.

This sequence belongs to the PSMG2 family. In terms of assembly, forms a heterodimer with PSMG1. The PSMG1-PSMG2 heterodimer interacts directly with the PSMA5 and PSMA7 proteasome alpha subunits. Post-translationally, degraded by the proteasome upon completion of 20S proteasome maturation. As to expression, widely expressed with highest levels in lung, brain and colon. Moderately expressed in muscle, stomach, spleen and heart. Weakly expressed in small intestine, pancreas and liver. Highly expressed in hepatocellular carcinomas with low levels in surrounding liver tissue.

The protein resides in the nucleus. Chaperone protein which promotes assembly of the 20S proteasome as part of a heterodimer with PSMG1. The PSMG1-PSMG2 heterodimer binds to the PSMA5 and PSMA7 proteasome subunits, promotes assembly of the proteasome alpha subunits into the heteroheptameric alpha ring and prevents alpha ring dimerization. This Homo sapiens (Human) protein is Proteasome assembly chaperone 2.